The following is a 1317-amino-acid chain: Kinesin-like protein KIF16B (1317 aa).

The 356-residue stretch at serine 3–isoleucine 358 folds into the Kinesin motor domain. Position 102–109 (glycine 102–serine 109) interacts with ATP. Positions valine 370–lysine 425 form a coiled coil. Serine 398 carries the post-translational modification Phosphoserine. One can recognise an FHA domain in the interval threonine 478 to isoleucine 529. A Phosphothreonine modification is found at threonine 577. Position 582 is a phosphoserine (serine 582). Coiled-coil stretches lie at residues glycine 595–valine 882 and leucine 936–aspartate 1087. Polar residues predominate over residues leucine 1036–glycine 1048. A disordered region spans residues leucine 1036 to glutamine 1057. Position 1052 is a phosphoserine (serine 1052). Residues aspartate 1182–threonine 1296 form the PX domain.

This sequence belongs to the TRAFAC class myosin-kinesin ATPase superfamily. Kinesin family. In terms of assembly, interacts with RAB14. Interacts with PTPN21. As to expression, primarily expressed in brain. Also present in kidney, liver, intestine, placenta, leukocytes, heart and skeletal muscle (at protein level).

The protein localises to the cytoplasm. It localises to the cytoskeleton. Its subcellular location is the early endosome membrane. It is found in the spindle. Its function is as follows. Plus end-directed microtubule-dependent motor protein involved in endosome transport and receptor recycling and degradation. Regulates the plus end motility of early endosomes and the balance between recycling and degradation of receptors such as EGF receptor (EGFR) and FGF receptor (FGFR). Regulates the Golgi to endosome transport of FGFR-containing vesicles during early development, a key process for developing basement membrane and epiblast and primitive endoderm lineages during early postimplantation development. In Homo sapiens (Human), this protein is Kinesin-like protein KIF16B (KIF16B).